The primary structure comprises 598 residues: Aspartate--tRNA(Asp/Asn) ligase (598 aa).

E173 lines the L-aspartate pocket. The aspartate stretch occupies residues 197 to 200 (QLFK). Residue R219 participates in L-aspartate binding. Residues 219 to 221 (RDE) and Q228 each bind ATP. An L-aspartate-binding site is contributed by H448. E482 serves as a coordination point for ATP. R489 is an L-aspartate binding site. Residue 534 to 537 (GWDR) participates in ATP binding. The tract at residues 560-598 (GYDPLTAAPAPITAQQRKEAGVDAKPETKKAAAGEPAGA) is disordered. Over residues 575-591 (QRKEAGVDAKPETKKAA) the composition is skewed to basic and acidic residues.

Belongs to the class-II aminoacyl-tRNA synthetase family. Type 1 subfamily. In terms of assembly, homodimer.

It localises to the cytoplasm. It carries out the reaction tRNA(Asx) + L-aspartate + ATP = L-aspartyl-tRNA(Asx) + AMP + diphosphate. Its function is as follows. Aspartyl-tRNA synthetase with relaxed tRNA specificity since it is able to aspartylate not only its cognate tRNA(Asp) but also tRNA(Asn). Reaction proceeds in two steps: L-aspartate is first activated by ATP to form Asp-AMP and then transferred to the acceptor end of tRNA(Asp/Asn). The sequence is that of Aspartate--tRNA(Asp/Asn) ligase from Kineococcus radiotolerans (strain ATCC BAA-149 / DSM 14245 / SRS30216).